The following is a 24-amino-acid chain: Heat shock 70 kDa protein 4L (24 aa).

The residue at position 19 (Thr19) is a Phosphothreonine.

The protein belongs to the heat shock protein 70 family. Homodimer. In the testis, forms a complex with p53 at 32.5 degrees Celsius which is scrotal temperature but not at 37 or 42 degrees Celsius. As to expression, expressed at high levels in testis and at much lower levels in brain. In testis, expressed mainly in germ cells. Widespread in brain with highest expression in cerebellum and medulla oblongata. Also expressed in renal medulla of water-restricted animals.

The protein resides in the cytoplasm. Its subcellular location is the nucleus. Its function is as follows. Possesses chaperone activity in vitro where it inhibits aggregation of citrate synthase. The sequence is that of Heat shock 70 kDa protein 4L (Hspa4l) from Rattus norvegicus (Rat).